Here is a 100-residue protein sequence, read N- to C-terminus: Thioredoxin (100 aa).

A Thioredoxin domain is found at 1 to 100 (MKHITNKAEL…PKNELKELLK (100 aa)). A disulfide bond links Cys-29 and Cys-32.

Belongs to the thioredoxin family.

Its function is as follows. Participates in various redox reactions through the reversible oxidation of its active center dithiol to a disulfide and catalyzes dithiol-disulfide exchange reactions. The protein is Thioredoxin (trxA) of Mycoplasmoides gallisepticum (strain R(low / passage 15 / clone 2)) (Mycoplasma gallisepticum).